The sequence spans 226 residues: PKHD-type hydroxylase PFL_0865 (226 aa).

One can recognise a Fe2OG dioxygenase domain in the interval 78-178 (KVFPPLINCY…RYASFFWTQS (101 aa)). Fe cation-binding residues include His96, Asp98, and His159. Arg169 is a binding site for 2-oxoglutarate.

It depends on Fe(2+) as a cofactor. Requires L-ascorbate as cofactor.

The sequence is that of PKHD-type hydroxylase PFL_0865 from Pseudomonas fluorescens (strain ATCC BAA-477 / NRRL B-23932 / Pf-5).